Reading from the N-terminus, the 222-residue chain is Ethylene-inducing xylanase 2 (222 aa).

Residues 1–19 (MITFSSLLVTFSAISTSLA) form the signal peptide. Positions 36 to 222 (QRNESSLVRR…GEGAATQTVS (187 aa)) constitute a GH11 domain. 2 N-linked (GlcNAc...) asparagine glycosylation sites follow: Asn38 and Asn94. The Nucleophile role is filled by Glu120. Glu209 acts as the Proton donor in catalysis.

It belongs to the glycosyl hydrolase 11 (cellulase G) family.

The enzyme catalyses Endohydrolysis of (1-&gt;4)-beta-D-xylosidic linkages in xylans.. Its pathway is glycan degradation; xylan degradation. Functionally, endo-1,4-beta-xylanase involved in the hydrolysis of xylan, a major structural heterogeneous polysaccharide found in plant biomass representing the second most abundant polysaccharide in the biosphere, after cellulose. May act as an elicitor of plant defense responses in certain plants but does not exhibit any cell death when transiently expressed in N.benthamiana. This is Ethylene-inducing xylanase 2 from Botryotinia fuckeliana (strain B05.10) (Noble rot fungus).